The following is a 247-amino-acid chain: MRGLILALGFLTRLPLPVLRDFQCAELVRAVVWFPAAGLVVGAAVALAAALGTVLDPWLGALAGVVMWAWITGGLHLDGLADTADALGAAHRDPARFLTVLADPHVGSFGVIVLVLQLAAKLVLLHWLLTLDLPWPALVLIPAWTRWAAAGWTLLLPPLKPGLGERFAWQGNRAGWGAGGLALAAVSAITPIAFVALIPAVLWGVWMWLKLGGQTGDILGAGIEWSESAALLLAGVSLALARGIIAG.

The next 6 helical transmembrane spans lie at 31 to 51 (VVWF…AAAL), 57 to 77 (PWLG…GLHL), 109 to 129 (FGVI…HWLL), 136 to 156 (PALV…TLLL), 189 to 209 (ITPI…WMWL), and 218 to 238 (ILGA…GVSL).

This sequence belongs to the CobS family. It depends on Mg(2+) as a cofactor.

It localises to the cell inner membrane. It catalyses the reaction alpha-ribazole + adenosylcob(III)inamide-GDP = adenosylcob(III)alamin + GMP + H(+). It carries out the reaction alpha-ribazole 5'-phosphate + adenosylcob(III)inamide-GDP = adenosylcob(III)alamin 5'-phosphate + GMP + H(+). It functions in the pathway cofactor biosynthesis; adenosylcobalamin biosynthesis; adenosylcobalamin from cob(II)yrinate a,c-diamide: step 7/7. Functionally, joins adenosylcobinamide-GDP and alpha-ribazole to generate adenosylcobalamin (Ado-cobalamin). Also synthesizes adenosylcobalamin 5'-phosphate from adenosylcobinamide-GDP and alpha-ribazole 5'-phosphate. The protein is Adenosylcobinamide-GDP ribazoletransferase of Thiobacillus denitrificans (strain ATCC 25259 / T1).